The sequence spans 379 residues: Queuine tRNA-ribosyltransferase (379 aa).

Aspartate 94 acts as the Proton acceptor in catalysis. Substrate contacts are provided by residues 94-98 (DSGGF), aspartate 148, glutamine 191, and glycine 218. Residues 249–255 (GVGSPDA) form an RNA binding region. Aspartate 268 serves as the catalytic Nucleophile. The tract at residues 273 to 277 (TRIAR) is RNA binding; important for wobble base 34 recognition. Zn(2+)-binding residues include cysteine 306, cysteine 308, cysteine 311, and histidine 337.

Belongs to the queuine tRNA-ribosyltransferase family. Homodimer. Within each dimer, one monomer is responsible for RNA recognition and catalysis, while the other monomer binds to the replacement base PreQ1. It depends on Zn(2+) as a cofactor.

The catalysed reaction is 7-aminomethyl-7-carbaguanine + guanosine(34) in tRNA = 7-aminomethyl-7-carbaguanosine(34) in tRNA + guanine. The protein operates within tRNA modification; tRNA-queuosine biosynthesis. In terms of biological role, catalyzes the base-exchange of a guanine (G) residue with the queuine precursor 7-aminomethyl-7-deazaguanine (PreQ1) at position 34 (anticodon wobble position) in tRNAs with GU(N) anticodons (tRNA-Asp, -Asn, -His and -Tyr). Catalysis occurs through a double-displacement mechanism. The nucleophile active site attacks the C1' of nucleotide 34 to detach the guanine base from the RNA, forming a covalent enzyme-RNA intermediate. The proton acceptor active site deprotonates the incoming PreQ1, allowing a nucleophilic attack on the C1' of the ribose to form the product. After dissociation, two additional enzymatic reactions on the tRNA convert PreQ1 to queuine (Q), resulting in the hypermodified nucleoside queuosine (7-(((4,5-cis-dihydroxy-2-cyclopenten-1-yl)amino)methyl)-7-deazaguanosine). This is Queuine tRNA-ribosyltransferase from Staphylococcus aureus (strain bovine RF122 / ET3-1).